The primary structure comprises 247 residues: Carboxy-S-adenosyl-L-methionine synthase (247 aa).

S-adenosyl-L-methionine contacts are provided by residues Y39, 64 to 66, 89 to 90, 117 to 118, N132, and R199; these read GCS, DN, and DI.

It belongs to the class I-like SAM-binding methyltransferase superfamily. Cx-SAM synthase family. In terms of assembly, homodimer.

It catalyses the reaction prephenate + S-adenosyl-L-methionine = carboxy-S-adenosyl-L-methionine + 3-phenylpyruvate + H2O. Functionally, catalyzes the conversion of S-adenosyl-L-methionine (SAM) to carboxy-S-adenosyl-L-methionine (Cx-SAM). This Escherichia coli O127:H6 (strain E2348/69 / EPEC) protein is Carboxy-S-adenosyl-L-methionine synthase.